Consider the following 303-residue polypeptide: Porphobilinogen deaminase (303 aa).

Cys241 carries the S-(dipyrrolylmethanemethyl)cysteine modification.

It belongs to the HMBS family. As to quaternary structure, monomer. Dipyrromethane is required as a cofactor.

The enzyme catalyses 4 porphobilinogen + H2O = hydroxymethylbilane + 4 NH4(+). It participates in porphyrin-containing compound metabolism; protoporphyrin-IX biosynthesis; coproporphyrinogen-III from 5-aminolevulinate: step 2/4. The protein operates within porphyrin-containing compound metabolism; chlorophyll biosynthesis. Its function is as follows. Tetrapolymerization of the monopyrrole PBG into the hydroxymethylbilane pre-uroporphyrinogen in several discrete steps. This Roseiflexus castenholzii (strain DSM 13941 / HLO8) protein is Porphobilinogen deaminase.